Reading from the N-terminus, the 921-residue chain is Protein translocase subunit SecA (921 aa).

ATP is bound by residues Gln-85, 103 to 107 (GEGKT), and Asp-514. Positions 905, 907, 916, and 917 each coordinate Zn(2+).

It belongs to the SecA family. Monomer and homodimer. Part of the essential Sec protein translocation apparatus which comprises SecA, SecYEG and auxiliary proteins SecDF-YajC and YidC. Zn(2+) serves as cofactor.

The protein localises to the cell inner membrane. Its subcellular location is the cytoplasm. The enzyme catalyses ATP + H2O + cellular proteinSide 1 = ADP + phosphate + cellular proteinSide 2.. Functionally, part of the Sec protein translocase complex. Interacts with the SecYEG preprotein conducting channel. Has a central role in coupling the hydrolysis of ATP to the transfer of proteins into and across the cell membrane, serving both as a receptor for the preprotein-SecB complex and as an ATP-driven molecular motor driving the stepwise translocation of polypeptide chains across the membrane. This is Protein translocase subunit SecA from Herminiimonas arsenicoxydans.